The sequence spans 791 residues: Major facilitator superfamily domain-containing protein 6 (791 aa).

Alanine 2 bears the N-acetylalanine mark. Threonine 10 carries the post-translational modification Phosphothreonine. Positions 22 to 47 (LADPFNGISREPEPPSNETPSSTETS) are disordered. Positions 37–47 (SNETPSSTETS) are enriched in low complexity. 6 helical membrane-spanning segments follow: residues 73–93 (VFYF…PVYY), 105–125 (LLVG…GVVA), 132–152 (KIVL…IGFV), 286–306 (AIFL…ASSV), 335–355 (WGLA…EVLI), and 369–389 (QIVF…ATQF). A disordered region spans residues 407 to 427 (EIPQVERNNSTESSEETPTTT). Over residues 416–427 (STESSEETPTTT) the composition is skewed to low complexity. 6 helical membrane passes run 450-470 (VLFV…FLYW), 479-499 (TTLF…AYFF), 507-527 (IGHI…YIYI), 544-564 (GVTH…AVPP), 579-599 (LGLG…YFGA), and 605-625 (GIGM…WLAV). 2 disordered regions span residues 662–687 (MPRI…NKPA) and 723–791 (LQGT…AGGH). Residues 750-768 (SRNQPSPDAAASQTQTSPA) show a composition bias toward polar residues. Low complexity predominate over residues 782–791 (QQAQLAAGGH).

This sequence belongs to the major facilitator superfamily. MFSD6 family. As to quaternary structure, may interact with HLA-B62. In terms of tissue distribution, widely expressed. Expression levels in peripheral blood mononuclear cells are highly variable between individuals, including no expression at all.

It localises to the membrane. The sequence is that of Major facilitator superfamily domain-containing protein 6 (MFSD6) from Homo sapiens (Human).